The chain runs to 813 residues: Protein translocase subunit SecA 2 (813 aa).

Residues Gln-105, 123-127 (GEGKT), and Asp-525 contribute to the ATP site.

The protein belongs to the SecA family. Monomer and homodimer. Part of the essential Sec protein translocation apparatus which comprises SecA, SecYEG and auxiliary proteins SecDF-YajC and YidC.

The protein resides in the cell inner membrane. Its subcellular location is the cytoplasm. The enzyme catalyses ATP + H2O + cellular proteinSide 1 = ADP + phosphate + cellular proteinSide 2.. Part of the Sec protein translocase complex. Interacts with the SecYEG preprotein conducting channel. Has a central role in coupling the hydrolysis of ATP to the transfer of proteins into and across the cell membrane, serving both as a receptor for the preprotein-SecB complex and as an ATP-driven molecular motor driving the stepwise translocation of polypeptide chains across the membrane. This Rhodopseudomonas palustris (strain BisA53) protein is Protein translocase subunit SecA 2.